The primary structure comprises 132 residues: Fatty acid-binding protein 9 (132 aa).

S13, S14, S44, and S91 each carry phosphoserine.

The protein belongs to the calycin superfamily. Fatty-acid binding protein (FABP) family.

Its subcellular location is the cytoplasm. The sequence is that of Fatty acid-binding protein 9 (FABP9) from Homo sapiens (Human).